The primary structure comprises 74 residues: DNA-directed RNA polymerase subunit omega (74 aa).

It belongs to the RNA polymerase subunit omega family. In terms of assembly, the RNAP catalytic core consists of 2 alpha, 1 beta, 1 beta' and 1 omega subunit. When a sigma factor is associated with the core the holoenzyme is formed, which can initiate transcription.

It carries out the reaction RNA(n) + a ribonucleoside 5'-triphosphate = RNA(n+1) + diphosphate. In terms of biological role, promotes RNA polymerase assembly. Latches the N- and C-terminal regions of the beta' subunit thereby facilitating its interaction with the beta and alpha subunits. This is DNA-directed RNA polymerase subunit omega from Helicobacter pylori (strain Shi470).